We begin with the raw amino-acid sequence, 768 residues long: Pentatricopeptide repeat-containing protein At3g53360, mitochondrial (768 aa).

The N-terminal 70 residues, 1–70 (MATMLRLGAR…SSFKIRLRTY (70 aa)), are a transit peptide targeting the mitochondrion. PPR repeat units follow at residues 30–60 (TEEL…AQKN), 66–100 (RLRT…NCKY), 101–131 (DTIL…MPER), 132–166 (NLVS…DLVP), 167–201 (DQFA…ESSS), 202–232 (HLIA…IPMK), 233–267 (DLIS…GVFH), 269–303 (NEYI…ELAG), 304–334 (NAIA…IERP), 335–369 (DTAS…GFIP), 370–404 (DAIS…GFLA), 405–435 (DLTV…FRNN), 437–471 (DSVS…ECEP), 472–506 (DHIT…GLAP), 507–537 (EQFI…MDNR), 538–572 (DVVS…GIEP), 573–608 (NHVT…GISP), and 609–639 (TKEH…MKLE). Positions 644–719 (VWKTLLSACK…IPGQSWIEIE (76 aa)) are type E motif. Residues 720–750 (DKIHIFFAEDIFHPERDDIYTVLHNIWSQML) form a type E(+) motif region.

This sequence belongs to the PPR family. PCMP-E subfamily.

The protein resides in the mitochondrion. The polypeptide is Pentatricopeptide repeat-containing protein At3g53360, mitochondrial (PCMP-E86) (Arabidopsis thaliana (Mouse-ear cress)).